Here is a 430-residue protein sequence, read N- to C-terminus: Small ribosomal subunit protein uS3m (430 aa).

It belongs to the universal ribosomal protein uS3 family.

It localises to the mitochondrion. The protein is Small ribosomal subunit protein uS3m (RPS3) of Marchantia polymorpha (Common liverwort).